The primary structure comprises 236 residues: Small ribosomal subunit protein uS2c (236 aa).

The protein belongs to the universal ribosomal protein uS2 family.

It is found in the plastid. The protein localises to the chloroplast. This chain is Small ribosomal subunit protein uS2c (rps2), found in Olimarabidopsis pumila (Dwarf rocket).